We begin with the raw amino-acid sequence, 364 residues long: tRNA 2-selenouridine synthase (364 aa).

The region spanning 14 to 137 (LLADTPLIDV…LRQTAIQATW (124 aa)) is the Rhodanese domain. The active-site S-selanylcysteine intermediate is the C97.

This sequence belongs to the SelU family. Monomer.

It carries out the reaction 5-methylaminomethyl-2-thiouridine(34) in tRNA + selenophosphate + (2E)-geranyl diphosphate + H2O + H(+) = 5-methylaminomethyl-2-selenouridine(34) in tRNA + (2E)-thiogeraniol + phosphate + diphosphate. The enzyme catalyses 5-methylaminomethyl-2-thiouridine(34) in tRNA + (2E)-geranyl diphosphate = 5-methylaminomethyl-S-(2E)-geranyl-thiouridine(34) in tRNA + diphosphate. The catalysed reaction is 5-methylaminomethyl-S-(2E)-geranyl-thiouridine(34) in tRNA + selenophosphate + H(+) = 5-methylaminomethyl-2-(Se-phospho)selenouridine(34) in tRNA + (2E)-thiogeraniol. It catalyses the reaction 5-methylaminomethyl-2-(Se-phospho)selenouridine(34) in tRNA + H2O = 5-methylaminomethyl-2-selenouridine(34) in tRNA + phosphate. Functionally, involved in the post-transcriptional modification of the uridine at the wobble position (U34) of tRNA(Lys), tRNA(Glu) and tRNA(Gln). Catalyzes the conversion of 2-thiouridine (S2U-RNA) to 2-selenouridine (Se2U-RNA). Acts in a two-step process involving geranylation of 2-thiouridine (S2U) to S-geranyl-2-thiouridine (geS2U) and subsequent selenation of the latter derivative to 2-selenouridine (Se2U) in the tRNA chain. In Salmonella enteritidis PT4 (strain P125109), this protein is tRNA 2-selenouridine synthase.